The chain runs to 428 residues: 3-phosphoshikimate 1-carboxyvinyltransferase (428 aa).

Lys-22, Ser-23, and Arg-27 together coordinate 3-phosphoshikimate. Residue Lys-22 coordinates phosphoenolpyruvate. Residues Gly-96 and Arg-124 each contribute to the phosphoenolpyruvate site. 6 residues coordinate 3-phosphoshikimate: Ser-171, Ser-172, Gln-173, Ser-198, Asp-311, and Lys-338. A phosphoenolpyruvate-binding site is contributed by Gln-173. The Proton acceptor role is filled by Asp-311. Phosphoenolpyruvate-binding residues include Arg-342 and Arg-383.

It belongs to the EPSP synthase family. In terms of assembly, monomer.

Its subcellular location is the cytoplasm. It carries out the reaction 3-phosphoshikimate + phosphoenolpyruvate = 5-O-(1-carboxyvinyl)-3-phosphoshikimate + phosphate. It functions in the pathway metabolic intermediate biosynthesis; chorismate biosynthesis. Its function is as follows. Catalyzes the transfer of the enolpyruvyl moiety of phosphoenolpyruvate (PEP) to the 5-hydroxyl of shikimate-3-phosphate (S3P) to produce enolpyruvyl shikimate-3-phosphate and inorganic phosphate. This chain is 3-phosphoshikimate 1-carboxyvinyltransferase, found in Methanopyrus kandleri (strain AV19 / DSM 6324 / JCM 9639 / NBRC 100938).